A 74-amino-acid chain; its full sequence is ATP synthase subunit 9, mitochondrial (74 aa).

Helical transmembrane passes span 16–36 and 50–70; these read GLIG…IGVS and ILGF…AFLL.

Belongs to the ATPase C chain family. As to quaternary structure, F-type ATPases have 2 components, CF(1) - the catalytic core - and CF(0) - the membrane proton channel. CF(1) has five subunits: alpha(3), beta(3), gamma(1), delta(1), epsilon(1). CF(0) has three main subunits: a, b and c.

The protein resides in the mitochondrion inner membrane. Functionally, mitochondrial membrane ATP synthase (F(1)F(0) ATP synthase or Complex V) produces ATP from ADP in the presence of a proton gradient across the membrane which is generated by electron transport complexes of the respiratory chain. F-type ATPases consist of two structural domains, F(1) - containing the extramembraneous catalytic core and F(0) - containing the membrane proton channel, linked together by a central stalk and a peripheral stalk. During catalysis, ATP synthesis in the catalytic domain of F(1) is coupled via a rotary mechanism of the central stalk subunits to proton translocation. Part of the complex F(0) domain. A homomeric c-ring of probably 10 subunits is part of the complex rotary element. This chain is ATP synthase subunit 9, mitochondrial (atp-9), found in Neurospora crassa (strain ATCC 24698 / 74-OR23-1A / CBS 708.71 / DSM 1257 / FGSC 987).